The chain runs to 145 residues: MIALIQRVTQAKVDIAGVTVGAINHGLLVLLGVEKDDNQQKAKRLCEKVCGYRIFSDENDKMNLNVQQAGGSLLVVSQFTLAAETQKGMRPGFSNGAPPEMAENLYHYFVEQCKQQGLETQTGQFAADMQVTLTNDGPVTFWLQV.

Residues 137-138 carry the Gly-cisPro motif, important for rejection of L-amino acids motif; sequence GP.

It belongs to the DTD family. Homodimer.

The protein resides in the cytoplasm. The enzyme catalyses glycyl-tRNA(Ala) + H2O = tRNA(Ala) + glycine + H(+). It carries out the reaction a D-aminoacyl-tRNA + H2O = a tRNA + a D-alpha-amino acid + H(+). An aminoacyl-tRNA editing enzyme that deacylates mischarged D-aminoacyl-tRNAs. Also deacylates mischarged glycyl-tRNA(Ala), protecting cells against glycine mischarging by AlaRS. Acts via tRNA-based rather than protein-based catalysis; rejects L-amino acids rather than detecting D-amino acids in the active site. By recycling D-aminoacyl-tRNA to D-amino acids and free tRNA molecules, this enzyme counteracts the toxicity associated with the formation of D-aminoacyl-tRNA entities in vivo and helps enforce protein L-homochirality. The sequence is that of D-aminoacyl-tRNA deacylase from Proteus mirabilis (strain HI4320).